The following is a 231-amino-acid chain: MAIYKTKNTLKKMNLDYSFRTNSTLVSNSEMFSLLYADTTLQKYYKNIVCQDLCLKQDYKNIMECVSLNKIVCNTSSKHYAGEKESILPAFTALEMITGQKPKYTCAKKSISTFKLRQNQILGCKNSLRGNTMYRFLEKYISIVSTRIKDWSENYSSSNKSNSLTTAYNKDYVVLNSNLFPELQQHDELFQNVTGIEISFSTLSNNVKTSTKTSRYKKDGILLYSAFQMPK.

This sequence belongs to the universal ribosomal protein uL5 family.

Its subcellular location is the mitochondrion. The protein is Large ribosomal subunit protein uL5m (RPL5) of Prototheca wickerhamii.